The following is a 175-amino-acid chain: ATP synthase subunit b 2 (175 aa).

A helical membrane pass occupies residues 20 to 40 (LIFWTAVTFVIVLLILKKFAW).

It belongs to the ATPase B chain family. F-type ATPases have 2 components, F(1) - the catalytic core - and F(0) - the membrane proton channel. F(1) has five subunits: alpha(3), beta(3), gamma(1), delta(1), epsilon(1). F(0) has four main subunits: a(1), b(2) and c(10-14). The alpha and beta chains form an alternating ring which encloses part of the gamma chain. F(1) is attached to F(0) by a central stalk formed by the gamma and epsilon chains, while a peripheral stalk is formed by the delta and b chains.

The protein localises to the cell inner membrane. Its function is as follows. F(1)F(0) ATP synthase produces ATP from ADP in the presence of a proton or sodium gradient. F-type ATPases consist of two structural domains, F(1) containing the extramembraneous catalytic core and F(0) containing the membrane proton channel, linked together by a central stalk and a peripheral stalk. During catalysis, ATP synthesis in the catalytic domain of F(1) is coupled via a rotary mechanism of the central stalk subunits to proton translocation. Functionally, component of the F(0) channel, it forms part of the peripheral stalk, linking F(1) to F(0). The chain is ATP synthase subunit b 2 from Prosthecochloris aestuarii (strain DSM 271 / SK 413).